Here is a 946-residue protein sequence, read N- to C-terminus: Structure-specific endonuclease subunit SLX4 (946 aa).

A compositionally biased stretch (pro residues) spans M1–S14. Disordered regions lie at residues M1–D35, Q54–V119, P147–T318, A339–L399, T416–I471, F577–R748, and A765–S799. The span at Q54–E74 shows a compositional bias: basic and acidic residues. 2 stretches are compositionally biased toward basic residues: residues K160–A169 and K182–K195. Residues A278–P287 show a composition bias toward basic and acidic residues. Over residues S453–K469 the composition is skewed to basic residues. The span at K627 to M636 shows a compositional bias: basic and acidic residues. Polar residues predominate over residues K707–S717. Over residues K722–K733 the composition is skewed to basic and acidic residues.

The protein belongs to the SLX4 family. In terms of assembly, forms a heterodimer with SLX1. Post-translationally, phosphorylated in response to DNA damage.

It localises to the nucleus. Functionally, regulatory subunit of the SLX1-SLX4 structure-specific endonuclease that resolves DNA secondary structures generated during DNA repair and recombination. Has endonuclease activity towards branched DNA substrates, introducing single-strand cuts in duplex DNA close to junctions with ss-DNA. This is Structure-specific endonuclease subunit SLX4 from Phaeosphaeria nodorum (strain SN15 / ATCC MYA-4574 / FGSC 10173) (Glume blotch fungus).